Reading from the N-terminus, the 628-residue chain is Glutamyl-tRNA(Gln) amidotransferase subunit E (628 aa).

This sequence belongs to the GatB/GatE family. GatE subfamily. Heterodimer of GatD and GatE.

The catalysed reaction is L-glutamyl-tRNA(Gln) + L-glutamine + ATP + H2O = L-glutaminyl-tRNA(Gln) + L-glutamate + ADP + phosphate + H(+). Its function is as follows. Allows the formation of correctly charged Gln-tRNA(Gln) through the transamidation of misacylated Glu-tRNA(Gln) in organisms which lack glutaminyl-tRNA synthetase. The reaction takes place in the presence of glutamine and ATP through an activated gamma-phospho-Glu-tRNA(Gln). The GatDE system is specific for glutamate and does not act on aspartate. This is Glutamyl-tRNA(Gln) amidotransferase subunit E from Pyrococcus furiosus (strain ATCC 43587 / DSM 3638 / JCM 8422 / Vc1).